We begin with the raw amino-acid sequence, 2560 residues long: Plipastatin synthase subunit B (2560 aa).

The condensation 1 stretch occupies residues 7-310; it reads IQDIYPLSHM…NTVPVRIRSA (304 aa). Residues 7-1042 form a domain 1 (tyrosine-activating) region; sequence IQDIYPLSHM…AVKLMSLKEH (1036 aa). An adenylation 1 region spans residues 496 to 889; it reads TYRQLQVRAN…QAPGVKEAAV (394 aa). In terms of domain architecture, Carrier 1 spans 965–1040; that stretch reads APRTLIEADL…SMAVKLMSLK (76 aa). The residue at position 1000 (Ser1000) is an O-(pantetheine 4'-phosphoryl)serine. The segment at 1052–1342 is condensation 2; that stretch reads QRDVYPLSFS…NTLAMRSKPE (291 aa). Residues 1052 to 2553 form a domain 2 (D-allo-threonine-activating) region; it reads QRDVYPLSFS…DLTLDELSEI (1502 aa). The interval 1527-1927 is adenylation 2; the sequence is TYRDLNEKAE…QYPMIKEAAV (401 aa). One can recognise a Carrier 2 domain in the interval 2006–2080; sequence SPRNEIETVM…ELSARVRKDV (75 aa). Ser2041 carries the post-translational modification O-(pantetheine 4'-phosphoryl)serine. The tract at residues 2088-2553 is epimerization; that stretch reads VEGEITWTPI…DLTLDELSEI (466 aa).

It belongs to the ATP-dependent AMP-binding enzyme family. The cofactor is pantetheine 4'-phosphate.

Functionally, this protein is a multifunctional enzyme, able to activate and polymerize the amino acids Tyr and Thr as part of the biosynthesis of the lipopeptide antibiotic plipastatin. The Thr residue is further converted to the D-allo-isomer form. The activation sites for these amino acids consist of individual domains. The sequence is that of Plipastatin synthase subunit B (ppsB) from Bacillus subtilis (strain 168).